The sequence spans 89 residues: Peroxidase (89 aa).

Residue His-52 coordinates heme. Residues Thr-53 and Asp-68 each coordinate Ca(2+).

Requires heme b as cofactor. Ca(2+) is required as a cofactor.

It localises to the secreted. The catalysed reaction is 2 a phenolic donor + H2O2 = 2 a phenolic radical donor + 2 H2O. In terms of biological role, removal of H(2)O(2), oxidation of toxic reductants, biosynthesis and degradation of lignin, suberization, auxin catabolism, response to environmental stresses such as wounding, pathogen attack and oxidative stress. These functions might be dependent on each isozyme/isoform in each plant tissue. Active against p-coumaryl alcohol, coniferyl alcohol and coniferyl aldehyde. This Ginkgo biloba (Ginkgo) protein is Peroxidase.